A 641-amino-acid polypeptide reads, in one-letter code: MSTGAQTKAAAASQHADGPRLLADVGGTNARFALETGPGEITQIRVYPGAEYPTLTDAIRKYLKDAKIGRVNHAAIAIANPVDGDQVRMTNHNWSFSIEATRRALGFDTLLVVNDFTALAMALPGLTDAQRVQIGGGTRRQNSVIGLMGPGTGLGVSGLIPADDRWIALGSEGGHATFAPMDEREDLVLQYARRKYPHVSFERVCAGPGMEIIYRALAARDKKRIAANVDTADIVERAHAGDALALEAVECFCAILGTFAGNLAVTLGALGGIYIGGGVVPKLGELFMRSPFRARFEAKGRFEAYLANIPTYLITAEYPAFLGVSAILAEQLSNRTGGASSAVFERIRQMRDALTPAERRVADLALNHPRSIINDPIVNIARKADVSQPTVIRFCRSLGCQGLSDFKLKLATGLTGTIPMSHSQVHLGDTATDFGAKVLDNTVSAILQLREHLNFEHVEQAIDILNNARRIEFYGLGNSNIVAQDAHYKFFRFGIPTIAYGDLYMQAASAALLGKGDVIVAVSKSGRAPELLRVLDVAMQAGAKVIAITSSNTPLAKRATVALETDHIEMRESQLSMISRILHLVMIDILAVGVAIRRAAPNAELAEAMARAKARAGASAGDEAADVLDWLSHGAAPAAKD.

A glucokinase region spans residues 1–340; that stretch reads MSTGAQTKAA…QLSNRTGGAS (340 aa). 23 to 28 contacts ATP; sequence ADVGGT. The HTH rpiR-type domain maps to 341–417; that stretch reads SAVFERIRQM…LKLATGLTGT (77 aa). The tract at residues 341–641 is putative HTH-type transcriptional regulator; sequence SAVFERIRQM…SHGAAPAAKD (301 aa). The segment at residues 377 to 396 is a DNA-binding region (H-T-H motif); sequence IVNIARKADVSQPTVIRFCR. Residues 461–600 enclose the SIS domain; it reads AIDILNNARR…AVGVAIRRAA (140 aa). The chain crosses the membrane as a helical span at residues 576–596; it reads SMISRILHLVMIDILAVGVAI.

It in the N-terminal section; belongs to the bacterial glucokinase family.

The protein resides in the membrane. It carries out the reaction D-glucose + ATP = D-glucose 6-phosphate + ADP + H(+). The chain is Bifunctional protein glk (glk) from Burkholderia mallei (strain ATCC 23344).